A 348-amino-acid chain; its full sequence is Protein RecA (348 aa).

71–78 is an ATP binding site; the sequence is GVESSGKT.

This sequence belongs to the RecA family.

It is found in the cytoplasm. Its function is as follows. Can catalyze the hydrolysis of ATP in the presence of single-stranded DNA, the ATP-dependent uptake of single-stranded DNA by duplex DNA, and the ATP-dependent hybridization of homologous single-stranded DNAs. It interacts with LexA causing its activation and leading to its autocatalytic cleavage. The sequence is that of Protein RecA from Aquifex pyrophilus.